Consider the following 509-residue polypeptide: 2,3-bisphosphoglycerate-independent phosphoglycerate mutase (509 aa).

Mn(2+) contacts are provided by Asp14 and Ser64. The Phosphoserine intermediate role is filled by Ser64. Substrate is bound by residues His125, 155-156, Arg187, Arg193, 259-262, and Lys332; these read RD and RADR. The Mn(2+) site is built by Asp399, His403, Asp440, His441, and His459.

This sequence belongs to the BPG-independent phosphoglycerate mutase family. In terms of assembly, monomer. The cofactor is Mn(2+).

It catalyses the reaction (2R)-2-phosphoglycerate = (2R)-3-phosphoglycerate. It participates in carbohydrate degradation; glycolysis; pyruvate from D-glyceraldehyde 3-phosphate: step 3/5. Catalyzes the interconversion of 2-phosphoglycerate and 3-phosphoglycerate. This chain is 2,3-bisphosphoglycerate-independent phosphoglycerate mutase, found in Psychromonas ingrahamii (strain DSM 17664 / CCUG 51855 / 37).